Consider the following 127-residue polypeptide: Fumarate reductase subunit C (127 aa).

Transmembrane regions (helical) follow at residues 30-50 (ATVL…GCLV), 58-78 (GWLA…ALLG), and 107-127 (IIVL…LIVV).

This sequence belongs to the FrdC family. As to quaternary structure, part of an enzyme complex containing four subunits: a flavoprotein (FrdA), an iron-sulfur protein (FrdB), and two hydrophobic anchor proteins (FrdC and FrdD).

It localises to the cell inner membrane. Its function is as follows. Anchors the catalytic components of the fumarate reductase complex to the cell membrane, binds quinones. This is Fumarate reductase subunit C from Vibrio parahaemolyticus serotype O3:K6 (strain RIMD 2210633).